The sequence spans 401 residues: L-methionine gamma-lyase (401 aa).

Pyridoxal 5'-phosphate contacts are provided by residues 59–61 (YTR) and 89–90 (GI). Tyrosine 114 lines the substrate pocket. 210–212 (SAT) provides a ligand contact to pyridoxal 5'-phosphate. Lysine 213 carries the post-translational modification N6-(pyridoxal phosphate)lysine. Arginine 377 serves as a coordination point for substrate.

Belongs to the trans-sulfuration enzymes family. L-methionine gamma-lyase subfamily. As to quaternary structure, homotetramer; dimer of active dimers. Pyridoxal 5'-phosphate is required as a cofactor.

The catalysed reaction is L-methionine + H2O = methanethiol + 2-oxobutanoate + NH4(+). It catalyses the reaction L-homocysteine + H2O = 2-oxobutanoate + hydrogen sulfide + NH4(+) + H(+). Functionally, catalyzes the alpha,gamma-elimination of L-methionine to produce methanethiol, 2-oxobutanoate and ammonia; methanethiol (methyl mercaptan) is considered to be one of the main causes of the oral malodor associated with periodontitis and may also play a role in the pathogenicity of T.denticola. Also displays homocysteine desulfhydrase activity, degrading homocysteine to produce hydrogen sulfide, 2-oxobutanoate and ammonia. This Treponema denticola (strain ATCC 35405 / DSM 14222 / CIP 103919 / JCM 8153 / KCTC 15104) protein is L-methionine gamma-lyase.